Reading from the N-terminus, the 167-residue chain is Shikimate kinase (167 aa).

8-15 serves as a coordination point for ATP; that stretch reads GFMGSGKT.

Belongs to the shikimate kinase family.

It is found in the cytoplasm. It carries out the reaction shikimate + ATP = 3-phosphoshikimate + ADP + H(+). Its pathway is metabolic intermediate biosynthesis; chorismate biosynthesis; chorismate from D-erythrose 4-phosphate and phosphoenolpyruvate: step 5/7. The chain is Shikimate kinase from Helicobacter hepaticus (strain ATCC 51449 / 3B1).